We begin with the raw amino-acid sequence, 303 residues long: MNKEQTLAHNSSRVTFKELQQIIKMGLVQGNLIPAFAGSWLAIVLANHSFLSSIPQILMMLVGSTLIMGGACALNNYYDQDIDSIMPSKQQRPTVNERISNRNLLILSFGMMLIGEALLFALNIPSGVIGLLGIVGYVSFYSIWSKRHTVWNTVIGSFPGAVPPLIGWTAIEGNISLVAVALFLVIFCWQPIHFYALAIKRKDEYSLANIPMLPSVKGFNRTRVSMFFWLVVLLPLPFLLSSLGVTFIVLATLLNLGWLYLGLTSFKKDTDQTKWATKMFIYSLNYLVVFFVLVVVISLIQMF.

7 helical membrane passes run 25–45, 54–74, 118–138, 151–171, 177–197, 230–250, and 280–300; these read MGLV…AIVL, IPQI…ACAL, LLFA…VGYV, WNTV…WTAI, LVAV…FYAL, LVVL…FIVL, and FIYS…ISLI.

It belongs to the UbiA prenyltransferase family. Protoheme IX farnesyltransferase subfamily. Interacts with CtaA.

It is found in the cell membrane. It carries out the reaction heme b + (2E,6E)-farnesyl diphosphate + H2O = Fe(II)-heme o + diphosphate. It participates in porphyrin-containing compound metabolism; heme O biosynthesis; heme O from protoheme: step 1/1. Converts heme B (protoheme IX) to heme O by substitution of the vinyl group on carbon 2 of heme B porphyrin ring with a hydroxyethyl farnesyl side group. This Staphylococcus saprophyticus subsp. saprophyticus (strain ATCC 15305 / DSM 20229 / NCIMB 8711 / NCTC 7292 / S-41) protein is Protoheme IX farnesyltransferase.